The primary structure comprises 304 residues: N-acetylmuramic acid 6-phosphate etherase 1 (304 aa).

Polar residues predominate over residues 1–10 (MENSHLGSLT). Residues 1–20 (MENSHLGSLTTERRNERSKR) are disordered. The SIS domain maps to 58–221 (AVGSLKKGGR…STAAMIKMGK (164 aa)). Glu-86 functions as the Proton donor in the catalytic mechanism. The active site involves Glu-117.

The protein belongs to the GCKR-like family. MurNAc-6-P etherase subfamily. As to quaternary structure, homodimer.

It catalyses the reaction N-acetyl-D-muramate 6-phosphate + H2O = N-acetyl-D-glucosamine 6-phosphate + (R)-lactate. The protein operates within amino-sugar metabolism; N-acetylmuramate degradation. Its function is as follows. Specifically catalyzes the cleavage of the D-lactyl ether substituent of MurNAc 6-phosphate, producing GlcNAc 6-phosphate and D-lactate. This Bacillus licheniformis (strain ATCC 14580 / DSM 13 / JCM 2505 / CCUG 7422 / NBRC 12200 / NCIMB 9375 / NCTC 10341 / NRRL NRS-1264 / Gibson 46) protein is N-acetylmuramic acid 6-phosphate etherase 1.